Here is a 254-residue protein sequence, read N- to C-terminus: MLFLALGGPWAAGLRLSGKRTALWASSALRDPRAAVSRAASCRGSSGRVGGTGLSAAAPVLRRVRAQIPVCWERGVRCSHTQLDKSEDGRLIYTGNLARTVFGVKCFSYSTSLISLAFLPYIFAQNNVIFGSLPLQILFYGTIGSFTVITPALLHFLTKGYVIRLYHEARTDTYKAITYSVVLSEKSTVFHQNDVKIPNSTHVFTTFYAKTKSLLVNPALFPNPEDYNHLMGYDKPFTFDLEEASEKKQLKEEK.

A mitochondrion-targeting transit peptide spans 1–78; that stretch reads MLFLALGGPW…PVCWERGVRC (78 aa). Residues 79–112 lie on the Mitochondrial matrix side of the membrane; sequence SHTQLDKSEDGRLIYTGNLARTVFGVKCFSYSTS. The chain crosses the membrane as a helical span at residues 113-133; that stretch reads LISLAFLPYIFAQNNVIFGSL. Residues 134-136 lie on the Mitochondrial intermembrane side of the membrane; that stretch reads PLQ. A helical membrane pass occupies residues 137 to 157; that stretch reads ILFYGTIGSFTVITPALLHFL. Over 158–254 the chain is Mitochondrial matrix; the sequence is TKGYVIRLYH…SEKKQLKEEK (97 aa).

It belongs to the TMEM70 family. In terms of assembly, homooligomer. Interacts (homooligomer form) with ATP5MC1; this interaction facilitates the oligomer formation of subunit c/ATP5MC1 (c-ring) and the c-ring membrane insertion and also protects ATP5MC1 against intramitochondrial proteolysis. Interacts with the core subunits TMEM126B, NDUFAF1, ECSIT and ACAD9 of the MCIA complex. Interacts with ATP5MC3, TMEM242 and TIMMDC1.

It is found in the mitochondrion inner membrane. Scaffold protein that participates in the c-ring assembly of mitochondrial ATP synthase (F(1)F(0) ATP synthase or complex V) by facilitating the membrane insertion and oligomer formation of the subunit c/ATP5MC1 through its interaction. Therefore, participates in the early stage of mitochondrial ATP synthase biogenesis and also protects subunit c/ATP5MC1 against intramitochondrial proteolysis. In addition, binds the mitochondrial proton-transporting ATP synthase complexes I and may play a role in the stability of its membrane-bound subassemblies. The protein is Transmembrane protein 70, mitochondrial of Bos taurus (Bovine).